A 159-amino-acid chain; its full sequence is 6,7-dimethyl-8-ribityllumazine synthase (159 aa).

Residues Trp-30, Thr-64–Glu-66, and Cys-88–Ile-90 contribute to the 5-amino-6-(D-ribitylamino)uracil site. Residue Glu-93–Thr-94 coordinates (2S)-2-hydroxy-3-oxobutyl phosphate. The active-site Proton donor is the His-96. Phe-121 contacts 5-amino-6-(D-ribitylamino)uracil. Arg-135 contributes to the (2S)-2-hydroxy-3-oxobutyl phosphate binding site.

It belongs to the DMRL synthase family.

The enzyme catalyses (2S)-2-hydroxy-3-oxobutyl phosphate + 5-amino-6-(D-ribitylamino)uracil = 6,7-dimethyl-8-(1-D-ribityl)lumazine + phosphate + 2 H2O + H(+). Its pathway is cofactor biosynthesis; riboflavin biosynthesis; riboflavin from 2-hydroxy-3-oxobutyl phosphate and 5-amino-6-(D-ribitylamino)uracil: step 1/2. Its function is as follows. Catalyzes the formation of 6,7-dimethyl-8-ribityllumazine by condensation of 5-amino-6-(D-ribitylamino)uracil with 3,4-dihydroxy-2-butanone 4-phosphate. This is the penultimate step in the biosynthesis of riboflavin. This Cytophaga hutchinsonii (strain ATCC 33406 / DSM 1761 / CIP 103989 / NBRC 15051 / NCIMB 9469 / D465) protein is 6,7-dimethyl-8-ribityllumazine synthase.